The sequence spans 341 residues: BZIP domain-containing transcription factor BZP4 (341 aa).

Composition is skewed to polar residues over residues 1–32, 61–76, 128–139, and 150–163; these read MESS…PTNE, LTES…SHSL, PLTSHSRSQITH, and YSSS…SPVS. 2 disordered regions span residues 1-95 and 118-254; these read MESS…PHGM and TNHS…DKKQ. A compositionally biased stretch (low complexity) spans 178-192; it reads SPSSSSFPSSIPRTP. Composition is skewed to basic and acidic residues over residues 225-234 and 242-254; these read TGDRKHEKDS and EEYK…DKKQ. Positions 250-269 are basic motif; the sequence is KDKKQVRNRIGARRFRAKRK. The bZIP domain maps to 250–308; that stretch reads KDKKQVRNRIGARRFRAKRKDYVNQLEAGIRLRDDEITNLQSQLESQRNEINELRLQLK. The leucine-zipper stretch occupies residues 279 to 307; that stretch reads IRLRDDEITNLQSQLESQRNEINELRLQL.

The protein belongs to the bZIP family.

It is found in the nucleus. The protein localises to the cytoplasm. Transcription factor that promotes the production of melanin, a pigment that serves as antioxidant, reactive oxygen species (ROS) scavenger and that protect fungal pathogens from radiation and host immune responses. The chain is BZIP domain-containing transcription factor BZP4 from Cryptococcus neoformans var. grubii serotype A (strain H99 / ATCC 208821 / CBS 10515 / FGSC 9487) (Filobasidiella neoformans var. grubii).